A 60-amino-acid polypeptide reads, in one-letter code: Metallothionein B (60 aa).

The interval 1–28 (MDPCDCSKSGTCNCGGSCTCTNCSCTTC) is beta. Residues Cys-4, Cys-6, Cys-12, Cys-14, Cys-18, Cys-20, Cys-23, Cys-25, Cys-28, Cys-32, Cys-33, Cys-35, Cys-36, Cys-40, Cys-43, Cys-47, Cys-49, Cys-54, Cys-58, and Cys-59 each contribute to the a divalent metal cation site. An alpha region spans residues 29 to 60 (KKSCCPCCPSGCTKCASGCVCKGKTCDTSCCQ).

It belongs to the metallothionein superfamily. Type 1 family.

In terms of biological role, metallothioneins have a high content of cysteine residues that bind various heavy metals. The chain is Metallothionein B (mtb) from Dicentrarchus labrax (European seabass).